The chain runs to 342 residues: Dihydroorotase (342 aa).

Residues H13 and H15 each coordinate Zn(2+). Substrate is bound by residues 15–17 (HLR) and N41. K98, H135, and H173 together coordinate Zn(2+). K98 carries the N6-carboxylysine modification. H135 provides a ligand contact to substrate. L218 contributes to the substrate binding site. D246 lines the Zn(2+) pocket. Residue D246 is part of the active site. Residues H250 and A262 each contribute to the substrate site.

It belongs to the metallo-dependent hydrolases superfamily. DHOase family. Class II DHOase subfamily. In terms of assembly, homodimer. Zn(2+) serves as cofactor.

It catalyses the reaction (S)-dihydroorotate + H2O = N-carbamoyl-L-aspartate + H(+). Its pathway is pyrimidine metabolism; UMP biosynthesis via de novo pathway; (S)-dihydroorotate from bicarbonate: step 3/3. In terms of biological role, catalyzes the reversible cyclization of carbamoyl aspartate to dihydroorotate. The protein is Dihydroorotase of Aliivibrio salmonicida (strain LFI1238) (Vibrio salmonicida (strain LFI1238)).